Reading from the N-terminus, the 193-residue chain is MKEPMTKLENPVLMATIGGAQGLRGEVRAKAYTADPTALGDYGHLHSMDGRSFEILEIREMKNVVVVRFRGINDRNAAEALNGLELYIERDNLPDEELEDDEFYYADLEGLEARDDQGVSYGTVTGVFDFGAGDLLELKGPGKRPVLIPFSEASVLEIDLEAGTLLIDPLAAGLVDDPEELSKFTPDKPKKKK.

One can recognise a PRC barrel domain in the interval 100–173 (DDEFYYADLE…TLLIDPLAAG (74 aa)).

This sequence belongs to the RimM family. As to quaternary structure, binds ribosomal protein uS19.

It localises to the cytoplasm. An accessory protein needed during the final step in the assembly of 30S ribosomal subunit, possibly for assembly of the head region. Essential for efficient processing of 16S rRNA. May be needed both before and after RbfA during the maturation of 16S rRNA. It has affinity for free ribosomal 30S subunits but not for 70S ribosomes. In Rhizobium etli (strain CIAT 652), this protein is Ribosome maturation factor RimM.